A 209-amino-acid polypeptide reads, in one-letter code: GTP-binding nuclear protein Ran1B (209 aa).

A Small GTPase Ran-type domain is found at 1–162; sequence NFKLVIVGDG…LYLARKLAGD (162 aa). 9–16 serves as a coordination point for GTP; it reads DGGTGKTT. Residues 28–36 are switch-I; the sequence is KKYEPTIGV. Residues glycine 59, 113 to 116, and 141 to 143 contribute to the GTP site; these read NKVD and SAK. The interval 59–75 is switch-II; it reads GQEKFGGLRDGYYIHGQ. Residues 187–200 show a composition bias toward low complexity; the sequence is QHEAELAAAASQPL. Residues 187-209 form a disordered region; the sequence is QHEAELAAAASQPLPDDDDDAFD.

Belongs to the small GTPase superfamily. Ran family. In terms of assembly, found in a nuclear export complex with RanGTP, exportin and pre-miRNA.

It is found in the nucleus. Its function is as follows. GTP-binding protein involved in nucleocytoplasmic transport. Required for the import of protein into the nucleus and also for RNA export. Involved in chromatin condensation and control of cell cycle. This chain is GTP-binding nuclear protein Ran1B (RAN1B), found in Lotus japonicus (Lotus corniculatus var. japonicus).